Consider the following 178-residue polypeptide: Large ribosomal subunit protein uL6 (178 aa).

This sequence belongs to the universal ribosomal protein uL6 family. In terms of assembly, part of the 50S ribosomal subunit.

Its function is as follows. This protein binds to the 23S rRNA, and is important in its secondary structure. It is located near the subunit interface in the base of the L7/L12 stalk, and near the tRNA binding site of the peptidyltransferase center. The polypeptide is Large ribosomal subunit protein uL6 (Campylobacter hominis (strain ATCC BAA-381 / DSM 21671 / CCUG 45161 / LMG 19568 / NCTC 13146 / CH001A)).